The chain runs to 156 residues: MSLLIDFIDETEEVKEAYMSLIREVLEKAAQMENIEDGAEVSVTFVDNERIREINRDYRDKDQPTDVISFAMEEMGEGEMEIVGAEMPRMLGDLIISIPRAKEQAEEYGHSFDRELGFLALHGFLHLLGYDHMTEEEEKEMFGRQKEILEAFGLGR.

Positions 122, 126, and 132 each coordinate Zn(2+).

This sequence belongs to the endoribonuclease YbeY family. It depends on Zn(2+) as a cofactor.

The protein resides in the cytoplasm. In terms of biological role, single strand-specific metallo-endoribonuclease involved in late-stage 70S ribosome quality control and in maturation of the 3' terminus of the 16S rRNA. This is Endoribonuclease YbeY from Bacillus cereus (strain G9842).